A 72-amino-acid polypeptide reads, in one-letter code: MIIPWQDLDPETLDNLIESFVLREGTDYGEHERSLADKVADVKQQLKRGEAVLVWSELHETVNIMPRALFNG.

This sequence belongs to the UPF0270 family.

This is UPF0270 protein KPK_0377 from Klebsiella pneumoniae (strain 342).